A 197-amino-acid polypeptide reads, in one-letter code: RNA pyrophosphohydrolase (197 aa).

Positions Gly-6–Arg-150 constitute a Nudix hydrolase domain. The short motif at Gly-38–Gly-59 is the Nudix box element.

It belongs to the Nudix hydrolase family. RppH subfamily. It depends on a divalent metal cation as a cofactor.

Functionally, accelerates the degradation of transcripts by removing pyrophosphate from the 5'-end of triphosphorylated RNA, leading to a more labile monophosphorylated state that can stimulate subsequent ribonuclease cleavage. This Haemophilus ducreyi (strain 35000HP / ATCC 700724) protein is RNA pyrophosphohydrolase.